The following is a 156-amino-acid chain: 6,7-dimethyl-8-ribityllumazine synthase (156 aa).

5-amino-6-(D-ribitylamino)uracil contacts are provided by residues F23, 57 to 59, and 81 to 83; these read SFE and AVI. A (2S)-2-hydroxy-3-oxobutyl phosphate-binding site is contributed by 86 to 87; it reads GT. H89 (proton donor) is an active-site residue. Residue Y114 coordinates 5-amino-6-(D-ribitylamino)uracil. R128 is a (2S)-2-hydroxy-3-oxobutyl phosphate binding site.

Belongs to the DMRL synthase family. Forms an icosahedral capsid composed of 60 subunits, arranged as a dodecamer of pentamers.

The enzyme catalyses (2S)-2-hydroxy-3-oxobutyl phosphate + 5-amino-6-(D-ribitylamino)uracil = 6,7-dimethyl-8-(1-D-ribityl)lumazine + phosphate + 2 H2O + H(+). Its pathway is cofactor biosynthesis; riboflavin biosynthesis; riboflavin from 2-hydroxy-3-oxobutyl phosphate and 5-amino-6-(D-ribitylamino)uracil: step 1/2. Catalyzes the formation of 6,7-dimethyl-8-ribityllumazine by condensation of 5-amino-6-(D-ribitylamino)uracil with 3,4-dihydroxy-2-butanone 4-phosphate. This is the penultimate step in the biosynthesis of riboflavin. In Halorhodospira halophila (strain DSM 244 / SL1) (Ectothiorhodospira halophila (strain DSM 244 / SL1)), this protein is 6,7-dimethyl-8-ribityllumazine synthase.